The chain runs to 372 residues: Lipoyl synthase, mitochondrial (372 aa).

The transit peptide at 1–27 (MSLRCGGAVRTVGPRVFGRYVFSPVRE) directs the protein to the mitochondrion. Cysteine 106, cysteine 111, cysteine 117, cysteine 137, cysteine 141, cysteine 144, and serine 352 together coordinate [4Fe-4S] cluster. Positions 122 to 341 (EYATATATIM…EKVGNELGFH (220 aa)) constitute a Radical SAM core domain.

The protein belongs to the radical SAM superfamily. Lipoyl synthase family. The cofactor is [4Fe-4S] cluster.

It is found in the mitochondrion. It catalyses the reaction [[Fe-S] cluster scaffold protein carrying a second [4Fe-4S](2+) cluster] + N(6)-octanoyl-L-lysyl-[protein] + 2 oxidized [2Fe-2S]-[ferredoxin] + 2 S-adenosyl-L-methionine + 4 H(+) = [[Fe-S] cluster scaffold protein] + N(6)-[(R)-dihydrolipoyl]-L-lysyl-[protein] + 4 Fe(3+) + 2 hydrogen sulfide + 2 5'-deoxyadenosine + 2 L-methionine + 2 reduced [2Fe-2S]-[ferredoxin]. Its pathway is protein modification; protein lipoylation via endogenous pathway; protein N(6)-(lipoyl)lysine from octanoyl-[acyl-carrier-protein]: step 2/2. In terms of biological role, catalyzes the radical-mediated insertion of two sulfur atoms into the C-6 and C-8 positions of the octanoyl moiety bound to the lipoyl domains of lipoate-dependent enzymes, thereby converting the octanoylated domains into lipoylated derivatives. The sequence is that of Lipoyl synthase, mitochondrial from Bos taurus (Bovine).